The sequence spans 252 residues: tRNA (guanine-N(1)-)-methyltransferase (252 aa).

Residues G113 and 133–138 (IGDYVL) contribute to the S-adenosyl-L-methionine site. Low complexity predominate over residues 229-238 (VARPAANAPA). Residues 229-252 (VARPAANAPAKGESQKTPKNKTDG) form a disordered region. Basic and acidic residues predominate over residues 241-252 (ESQKTPKNKTDG).

Belongs to the RNA methyltransferase TrmD family. Homodimer.

It localises to the cytoplasm. The enzyme catalyses guanosine(37) in tRNA + S-adenosyl-L-methionine = N(1)-methylguanosine(37) in tRNA + S-adenosyl-L-homocysteine + H(+). Functionally, specifically methylates guanosine-37 in various tRNAs. This is tRNA (guanine-N(1)-)-methyltransferase from Rhodopseudomonas palustris (strain HaA2).